Here is a 623-residue protein sequence, read N- to C-terminus: UvrABC system protein C (623 aa).

Residues 12–91 (FSPGVYLYKD…IKQYKPRFNI (80 aa)) form the GIY-YIG domain. The region spanning 201-236 (SDLARGLRARMEAASLEMRFEEAAGLRDLITTVEEI) is the UVR domain. The interval 604 to 623 (PVASVAQSEDAAPDVPDPQA) is disordered.

It belongs to the UvrC family. In terms of assembly, interacts with UvrB in an incision complex.

It is found in the cytoplasm. Functionally, the UvrABC repair system catalyzes the recognition and processing of DNA lesions. UvrC both incises the 5' and 3' sides of the lesion. The N-terminal half is responsible for the 3' incision and the C-terminal half is responsible for the 5' incision. The sequence is that of UvrABC system protein C from Solibacter usitatus (strain Ellin6076).